We begin with the raw amino-acid sequence, 120 residues long: Probable early E4 13 kDa protein (120 aa).

The sequence is that of Probable early E4 13 kDa protein from Human adenovirus A serotype 12 (HAdV-12).